The sequence spans 254 residues: Phosphoribosylaminoimidazole-succinocarboxamide synthase (254 aa).

This sequence belongs to the SAICAR synthetase family.

The enzyme catalyses 5-amino-1-(5-phospho-D-ribosyl)imidazole-4-carboxylate + L-aspartate + ATP = (2S)-2-[5-amino-1-(5-phospho-beta-D-ribosyl)imidazole-4-carboxamido]succinate + ADP + phosphate + 2 H(+). Its pathway is purine metabolism; IMP biosynthesis via de novo pathway; 5-amino-1-(5-phospho-D-ribosyl)imidazole-4-carboxamide from 5-amino-1-(5-phospho-D-ribosyl)imidazole-4-carboxylate: step 1/2. The sequence is that of Phosphoribosylaminoimidazole-succinocarboxamide synthase from Bartonella quintana (strain Toulouse) (Rochalimaea quintana).